The sequence spans 77 residues: U8-lycotoxin-Ls1a (77 aa).

A signal peptide spans 1-20; it reads MKLIIFTGLVLFAIVSLIEA. Positions 21–26 are excised as a propeptide; sequence QAENEK.

This sequence belongs to the neurotoxin 19 (CSTX) family. 08 (U8-Lctx) subfamily. In terms of processing, contains 4 disulfide bonds. In terms of tissue distribution, expressed by the venom gland.

It localises to the secreted. This chain is U8-lycotoxin-Ls1a, found in Lycosa singoriensis (Wolf spider).